The sequence spans 161 residues: Ribonuclease H (161 aa).

In terms of domain architecture, RNase H type-1 spans 12 to 155 (QPQHVVIYTD…ADALANKGVE (144 aa)). Residues Asp-21, Glu-59, Asp-81, and Asp-147 each coordinate Mg(2+).

It belongs to the RNase H family. As to quaternary structure, monomer. The cofactor is Mg(2+).

It is found in the cytoplasm. It catalyses the reaction Endonucleolytic cleavage to 5'-phosphomonoester.. Functionally, endonuclease that specifically degrades the RNA of RNA-DNA hybrids. This Polaromonas naphthalenivorans (strain CJ2) protein is Ribonuclease H.